Reading from the N-terminus, the 406-residue chain is Tyrosine--tRNA ligase (406 aa).

L-tyrosine is bound at residue tyrosine 35. Residues 40 to 49 (PTADSLHVGH) carry the 'HIGH' region motif. Residues tyrosine 168 and glutamine 172 each contribute to the L-tyrosine site. The 'KMSKS' region motif lies at 228 to 232 (KMGKT). Lysine 231 contributes to the ATP binding site. The region spanning 340 to 404 (SELLDILVEA…RGKKNYNKIV (65 aa)) is the S4 RNA-binding domain.

Belongs to the class-I aminoacyl-tRNA synthetase family. TyrS type 1 subfamily. As to quaternary structure, homodimer.

The protein localises to the cytoplasm. It carries out the reaction tRNA(Tyr) + L-tyrosine + ATP = L-tyrosyl-tRNA(Tyr) + AMP + diphosphate + H(+). Catalyzes the attachment of tyrosine to tRNA(Tyr) in a two-step reaction: tyrosine is first activated by ATP to form Tyr-AMP and then transferred to the acceptor end of tRNA(Tyr). This Clostridium perfringens (strain SM101 / Type A) protein is Tyrosine--tRNA ligase.